The primary structure comprises 251 residues: Flagellar brake protein YcgR (251 aa).

The PilZ domain occupies 127–239 (QRRDGFRVRP…ASRTLQRYID (113 aa)).

Belongs to the YcgR family. Monomer. Interacts with the flagellar basal bodies.

It localises to the bacterial flagellum basal body. Functionally, acts as a flagellar brake, regulating swimming and swarming in a bis-(3'-5') cyclic diguanylic acid (c-di-GMP)-dependent manner. Binds 1 c-di-GMP dimer per subunit. Increasing levels of c-di-GMP lead to decreased motility. The chain is Flagellar brake protein YcgR from Leptothrix cholodnii (strain ATCC 51168 / LMG 8142 / SP-6) (Leptothrix discophora (strain SP-6)).